Reading from the N-terminus, the 110-residue chain is UPF0122 protein SAR1212 (110 aa).

It belongs to the UPF0122 family.

Its function is as follows. Might take part in the signal recognition particle (SRP) pathway. This is inferred from the conservation of its genetic proximity to ftsY/ffh. May be a regulatory protein. The chain is UPF0122 protein SAR1212 from Staphylococcus aureus (strain MRSA252).